Here is an 86-residue protein sequence, read N- to C-terminus: MPPRSIEEWFYYKLLSSPGFHRFVRKVYRKVNGIKEDPFTDQSTAFQYLYKPTPRQKFKALRLLFWDEMRSTFGFRRRLGDRFKKD.

As to quaternary structure, associates with the mitochondrial ribosome.

Its subcellular location is the mitochondrion. Its function is as follows. Component of MIOREX complexes, large expressome-like assemblies of ribosomes with factors involved in all the steps of post-transcriptional gene expression. The protein is MIOREX complex component 7 of Saccharomyces cerevisiae (strain ATCC 204508 / S288c) (Baker's yeast).